The sequence spans 192 residues: Probable Brix domain-containing ribosomal biogenesis protein (192 aa).

The 190-residue stretch at arginine 2 to lysine 191 folds into the Brix domain.

Its function is as follows. Probably involved in the biogenesis of the ribosome. This is Probable Brix domain-containing ribosomal biogenesis protein from Methanopyrus kandleri (strain AV19 / DSM 6324 / JCM 9639 / NBRC 100938).